The primary structure comprises 534 residues: CTP synthase (534 aa).

Residues 1–267 (MTKYIFVTGG…DQIVCDHLKL (267 aa)) form an amidoligase domain region. Serine 13 provides a ligand contact to CTP. Residue serine 13 coordinates UTP. Residue 14–19 (SIGKGI) coordinates ATP. L-glutamine is bound at residue tyrosine 54. Aspartate 71 is a binding site for ATP. The Mg(2+) site is built by aspartate 71 and glutamate 141. CTP-binding positions include 148–150 (DIE), 188–193 (KTKPTQ), and lysine 224. Residues 188–193 (KTKPTQ) and lysine 224 each bind UTP. The region spanning 292-534 (KIALVGKYVE…FVTAAVENMK (243 aa)) is the Glutamine amidotransferase type-1 domain. Glycine 354 provides a ligand contact to L-glutamine. Cysteine 381 acts as the Nucleophile; for glutamine hydrolysis in catalysis. L-glutamine contacts are provided by residues 382-385 (LGMQ), glutamate 405, and arginine 463. Catalysis depends on residues histidine 508 and glutamate 510.

This sequence belongs to the CTP synthase family. In terms of assembly, homotetramer.

It catalyses the reaction UTP + L-glutamine + ATP + H2O = CTP + L-glutamate + ADP + phosphate + 2 H(+). It carries out the reaction L-glutamine + H2O = L-glutamate + NH4(+). The catalysed reaction is UTP + NH4(+) + ATP = CTP + ADP + phosphate + 2 H(+). Its pathway is pyrimidine metabolism; CTP biosynthesis via de novo pathway; CTP from UDP: step 2/2. Its activity is regulated as follows. Allosterically activated by GTP, when glutamine is the substrate; GTP has no effect on the reaction when ammonia is the substrate. The allosteric effector GTP functions by stabilizing the protein conformation that binds the tetrahedral intermediate(s) formed during glutamine hydrolysis. Inhibited by the product CTP, via allosteric rather than competitive inhibition. In terms of biological role, catalyzes the ATP-dependent amination of UTP to CTP with either L-glutamine or ammonia as the source of nitrogen. Regulates intracellular CTP levels through interactions with the four ribonucleotide triphosphates. The protein is CTP synthase of Streptococcus agalactiae serotype V (strain ATCC BAA-611 / 2603 V/R).